A 317-amino-acid chain; its full sequence is Thymidylate synthase (317 aa).

DUMP contacts are provided by residues R40 and 167-168; that span reads RR. C187 functions as the Nucleophile in the catalytic mechanism. Residues 216–219, N227, and 257–259 each bind dUMP; these read RSCD and HVY. D219 is a (6R)-5,10-methylene-5,6,7,8-tetrahydrofolate binding site.

This sequence belongs to the thymidylate synthase family. As to quaternary structure, homodimer.

The enzyme catalyses dUMP + (6R)-5,10-methylene-5,6,7,8-tetrahydrofolate = 7,8-dihydrofolate + dTMP. It participates in pyrimidine metabolism; dTTP biosynthesis. This Cryptococcus neoformans var. neoformans serotype D (strain B-3501A) (Filobasidiella neoformans) protein is Thymidylate synthase (TMP1).